The chain runs to 139 residues: Histone H2B (139 aa).

Residues 1-37 (MAPKSVASKAPASQASKAPAAASKAPAKAAKTSAAPK) are compositionally biased toward low complexity. The interval 1 to 48 (MAPKSVASKAPASQASKAPAAASKAPAKAAKTSAAPKDGAKKRSKKRV) is disordered. K9 is modified (N6-acetyllysine; alternate). A Glycyl lysine isopeptide (Lys-Gly) (interchain with G-Cter in SUMO); alternate cross-link involves residue K9. At S13 the chain carries Phosphoserine. Position 17 is an N6-acetyllysine (K17). K134 participates in a covalent cross-link: Glycyl lysine isopeptide (Lys-Gly) (interchain with G-Cter in ubiquitin).

The protein belongs to the histone H2B family. The nucleosome is a histone octamer containing two molecules each of H2A, H2B, H3 and H4 assembled in one H3-H4 heterotetramer and two H2A-H2B heterodimers. The octamer wraps approximately 147 bp of DNA. In terms of processing, monoubiquitinated by the UBC2-BRE1 complex to form H2BK123ub1. H2BK123ub1 gives a specific tag for epigenetic transcriptional activation and is also prerequisite for H3K4me and H3K79me formation. H2BK123ub1 also modulates the formation of double-strand breaks during meiosis and is a prerequisite for DNA-damage checkpoint activation. Phosphorylated to form H2BS10ph during progression through meiotic prophase. May be correlated with chromosome condensation. Post-translationally, acetylation of N-terminal lysines and particularly formation of H2BK11ac has a positive effect on transcription. In terms of processing, sumoylation to form H2BK6su occurs preferentially near the telomeres and represses gene transcription.

Its subcellular location is the nucleus. It localises to the chromosome. Functionally, core component of nucleosome. Nucleosomes wrap and compact DNA into chromatin, limiting DNA accessibility to the cellular machineries which require DNA as a template. Histones thereby play a central role in transcription regulation, DNA repair, DNA replication and chromosomal stability. DNA accessibility is regulated via a complex set of post-translational modifications of histones, also called histone code, and nucleosome remodeling. The polypeptide is Histone H2B (HTB1) (Cryptococcus neoformans var. neoformans serotype D (strain B-3501A) (Filobasidiella neoformans)).